The sequence spans 347 residues: MNPLIFTLITSTIVLGTMIVMTSSHWLMIWMGFEMNMLAIIPMLMKQYSPRSMEAATKYFLTQATASMLLMLAIIINLVYSGQWTFTKLMNPTASIIMTVALAMKMGLAPFHFWVPEVTQGISLLSGLILLTWQKLAPLSVLYVISPIINLDLLLTMSILSILIGGWGGLNQTQLRKILAYSSIAHMGWMTSILIFNPMMTLLNLSLYILMTATTFTLFMTTSTTTTLALSHTWNKMPLITSSTLIIMLSLGGLPPLVGFLPKWMIIQELTKNNNIILATLMAITALLNLFFYMRLTYATSLTMFPTMNNMKIKWQFNHTKQTKCLPMLIVLSTMTLPLAPAMILLN.

10 consecutive transmembrane segments (helical) span residues 13-33 (IVLG…WMGF), 59-79 (YFLT…INLV), 96-116 (IIMT…FWVP), 122-142 (ISLL…LSVL), 144-164 (VISP…SILI), 178-200 (ILAY…NPMM), 210-232 (LMTA…ALSH), 246-266 (IIML…KWMI), 276-296 (IILA…YMRL), and 326-346 (LPML…MILL).

Belongs to the complex I subunit 2 family. Core subunit of respiratory chain NADH dehydrogenase (Complex I) which is composed of 45 different subunits. Interacts with TMEM242.

The protein localises to the mitochondrion inner membrane. It catalyses the reaction a ubiquinone + NADH + 5 H(+)(in) = a ubiquinol + NAD(+) + 4 H(+)(out). Functionally, core subunit of the mitochondrial membrane respiratory chain NADH dehydrogenase (Complex I) which catalyzes electron transfer from NADH through the respiratory chain, using ubiquinone as an electron acceptor. Essential for the catalytic activity and assembly of complex I. This chain is NADH-ubiquinone oxidoreductase chain 2, found in Rhynchonycteris naso (Brazilian long-nosed bat).